The sequence spans 119 residues: Virulence protein VsdF (119 aa).

In terms of biological role, expressed but non-essential protein, involved in the virulence of Salmonellas. The protein is Virulence protein VsdF (vsdF) of Salmonella dublin.